The primary structure comprises 300 residues: MKIGVIMGGISTEREVSLNSGREVIKYLELLEHEIIPIIIDKKEDVVEKVKGIDFAFLALHGEFGEDGTVQSVLQTLDIPYSGCGPLTSAICMDKDMTKKILKYANINTADWVNVSSVEDIDYEAIEKIGYPVFVKPNSGGSSVATNLVKDGDGIKEAVELALKYDKEVMIENYTKGEEITCCMLNGKMLPVLAIRPHAEFFDYTAKYADGGSDEVVIELEENLHKKVEEMALACWKELKCEVYVRVDMIVKAGVPYVLELNTLPGMTKNSLFPKSANAVGISFAELLNSIVKYSLEVER.

The region spanning 99 to 293 (KKILKYANIN…FAELLNSIVK (195 aa)) is the ATP-grasp domain. Position 126 to 181 (126 to 181 (IEKIGYPVFVKPNSGGSSVATNLVKDGDGIKEAVELALKYDKEVMIENYTKGEEIT)) interacts with ATP. Mg(2+) contacts are provided by Asp248, Glu260, and Asn262.

Belongs to the D-alanine--D-alanine ligase family. Mg(2+) is required as a cofactor. The cofactor is Mn(2+).

Its subcellular location is the cytoplasm. The enzyme catalyses 2 D-alanine + ATP = D-alanyl-D-alanine + ADP + phosphate + H(+). It participates in cell wall biogenesis; peptidoglycan biosynthesis. In terms of biological role, cell wall formation. This Clostridium botulinum (strain 657 / Type Ba4) protein is D-alanine--D-alanine ligase.